Reading from the N-terminus, the 43-residue chain is Protein PsbN (43 aa).

The helical transmembrane segment at 5–27 (TFLSIFISAALLGITGYSIYTAF) threads the bilayer.

The protein belongs to the PsbN family.

The protein localises to the plastid. The protein resides in the cyanelle thylakoid membrane. In terms of biological role, may play a role in photosystem I and II biogenesis. This is Protein PsbN from Cyanophora paradoxa.